The chain runs to 373 residues: Enoyl-[acyl-carrier-protein] reductase, mitochondrial (373 aa).

A mitochondrion-targeting transit peptide spans 1–53 (MLVSQRVTGARARAPQLAGLLEAWYRHGRTTSSYSALSEPSRVRALVYGNHGD). The residue at position 61 (K61) is an N6-acetyllysine; alternate. K61 bears the N6-succinyllysine; alternate mark. The active-site Proton donor is the Y94. Residues N167, 193–196 (NSGV), and 216–218 (RDR) each bind NADP(+). N6-acetyllysine; alternate occurs at positions 252 and 267. 2 positions are modified to N6-succinyllysine; alternate: K252 and K267. NADP(+) is bound by residues 285–288 (YGGM) and 310–312 (FWL). K316 carries the post-translational modification N6-succinyllysine. K368 serves as a coordination point for NADP(+).

Belongs to the zinc-containing alcohol dehydrogenase family. Quinone oxidoreductase subfamily. In terms of assembly, homodimer. As to expression, expressed in Purkinje cells (at protein level).

Its subcellular location is the mitochondrion. It catalyses the reaction a 2,3-saturated acyl-[ACP] + NADP(+) = a (2E)-enoyl-[ACP] + NADPH + H(+). The catalysed reaction is (2E)-butenoyl-[ACP] + NADPH + H(+) = butanoyl-[ACP] + NADP(+). The enzyme catalyses (2E)-hexenoyl-[ACP] + NADPH + H(+) = hexanoyl-[ACP] + NADP(+). It carries out the reaction (2E)-octenoyl-[ACP] + NADPH + H(+) = octanoyl-[ACP] + NADP(+). It catalyses the reaction (2E)-decenoyl-[ACP] + NADPH + H(+) = decanoyl-[ACP] + NADP(+). The catalysed reaction is (2E)-dodecenoyl-[ACP] + NADPH + H(+) = dodecanoyl-[ACP] + NADP(+). The enzyme catalyses (2E)-tetradecenoyl-[ACP] + NADPH + H(+) = tetradecanoyl-[ACP] + NADP(+). It carries out the reaction (2E)-hexadecenoyl-[ACP] + NADPH + H(+) = hexadecanoyl-[ACP] + NADP(+). Its function is as follows. Catalyzes the NADPH-dependent reduction of trans-2-enoyl thioesters in mitochondrial fatty acid synthesis (fatty acid synthesis type II). Fatty acid chain elongation in mitochondria uses acyl carrier protein (ACP) as an acyl group carrier, but the enzyme accepts both ACP and CoA thioesters as substrates in vitro. Displays a preference for medium-chain over short- and long-chain substrates. May provide the octanoyl chain used for lipoic acid biosynthesis, regulating protein lipoylation and mitochondrial respiratory activity particularly in Purkinje cells. Involved in iron homeostasis; affecting Fe-S cluster assembly and ceramide metabolism. Required for proper morphology and bioenergetic functions of mitochondria. Required for maintenance of neurons. This chain is Enoyl-[acyl-carrier-protein] reductase, mitochondrial (Mecr), found in Mus musculus (Mouse).